Here is a 359-residue protein sequence, read N- to C-terminus: MRQILVAVTVALVVSILLTPALIRLFTRHGFGQEIREDGPPSHHNKRGTPSMGGVAIVAGIWAGYLGTHLAGLAFDGEGVSASGVLVLGLATALGGVGFLDDLIKIRRSRNLGLNKTAKTVGQITAAVLFGVLVLQFRNGAGLTPASADLSYVREIATVTLAPALFVLFCMVIVSAWSNAVNFTDGLDGLAAGSMAMVTAAYVLITFWQYRNACVTAPGLGCYNVRDPLDLTLIAAATVGACIGFLWWNAAPAKIFMGDTGSLALGGVIAGLSVTSRTEILAVVLGSLFVAEITSVVLQILAFRTTGRRVFRMAPFHHHFELAGWAETTVIIRFWLLTAIACGLGVVLFYGEWLATIGA.

A run of 10 helical transmembrane segments spans residues 3 to 23 (QILV…PALI), 55 to 75 (VAIV…GLAF), 80 to 100 (VSAS…VGFL), 117 to 137 (TAKT…VLQF), 156 to 176 (IATV…IVSA), 187 to 207 (LDGL…LITF), 231 to 251 (LTLI…WNAA), 255 to 275 (IFMG…LSVT), 280 to 300 (ILAV…VLQI), and 334 to 354 (FWLL…GEWL).

Belongs to the glycosyltransferase 4 family. MraY subfamily. The cofactor is Mg(2+).

It localises to the cell membrane. The enzyme catalyses UDP-N-acetyl-alpha-D-muramoyl-L-alanyl-gamma-D-glutamyl-meso-2,6-diaminopimeloyl-D-alanyl-D-alanine + di-trans,octa-cis-undecaprenyl phosphate = di-trans,octa-cis-undecaprenyl diphospho-N-acetyl-alpha-D-muramoyl-L-alanyl-D-glutamyl-meso-2,6-diaminopimeloyl-D-alanyl-D-alanine + UMP. It functions in the pathway cell wall biogenesis; peptidoglycan biosynthesis. Its function is as follows. Catalyzes the initial step of the lipid cycle reactions in the biosynthesis of the cell wall peptidoglycan: transfers peptidoglycan precursor phospho-MurNAc-pentapeptide from UDP-MurNAc-pentapeptide onto the lipid carrier undecaprenyl phosphate, yielding undecaprenyl-pyrophosphoryl-MurNAc-pentapeptide, known as lipid I. The chain is Phospho-N-acetylmuramoyl-pentapeptide-transferase from Mycobacterium leprae (strain TN).